Here is a 2009-residue protein sequence, read N- to C-terminus: Protein Daple (2009 aa).

The Calponin-homology (CH) domain maps to 11 to 131; that stretch reads LFLQSPLVTW…KVLLLVLGCA (121 aa). The interval 221 to 251 is disordered; sequence QTQQPPSPGKFSSPDSTPSPTSSLSSEDKQH. Phosphoserine is present on residues Ser-227 and Ser-239. Residues 232-245 show a composition bias toward low complexity; that stretch reads SSPDSTPSPTSSLS. Coiled-coil stretches lie at residues 247-425 and 456-1008; these read EDKQ…QKQS and ELNE…TQEG. Ser-486 carries the post-translational modification Phosphoserine. Positions 1002–1036 are disordered; the sequence is LRQTQEGGDKAQNALKRPPGKVTSHQEKEAWEPSH. The segment covering 1025 to 1036 has biased composition (basic and acidic residues); the sequence is SHQEKEAWEPSH. A coiled-coil region spans residues 1190–1384; the sequence is HRNLELEHKE…LEEKIMDQYK (195 aa). Over residues 1410–1419 the composition is skewed to basic and acidic residues; the sequence is KEGSRERLKS. Disordered stretches follow at residues 1410–1716 and 1757–1787; these read KEGS…GAKM and GMPS…HMPV. Low complexity predominate over residues 1430–1439; sequence PSDPASPSPS. Ser-1435 carries the phosphoserine modification. The segment covering 1440–1449 has biased composition (polar residues); it reads QALRSQTENP. Composition is skewed to low complexity over residues 1510 to 1524 and 1562 to 1581; these read TFST…SSST and NSLE…SLKG. Residue Ser-1592 is modified to Phosphoserine. A GBA motif is present at residues 1652 to 1683; the sequence is HSASPSSEMVTLEEFLEESNRGGSPTHDTPSC. Residues 1681-1697 show a composition bias toward basic and acidic residues; that stretch reads PSCRDDLLSDYFRKAHD. The segment covering 1761–1783 has biased composition (polar residues); that stretch reads RQVQPPQSLSLGRPRQTTMTQNC. Ser-1798 bears the Phosphoserine mark. Residues 1808–2009 are disordered; the sequence is SGPEACRPES…QTVWYEYGCV (202 aa). A compositionally biased stretch (basic and acidic residues) spans 1866–1883; it reads RPLDTRRFSLAPPKEERL. Positions 1898 to 1911 are enriched in polar residues; sequence GCSSGSNPQIQHFS. Over residues 1943–1954 the composition is skewed to gly residues; it reads TSEGDGGPGHGY. Over residues 1981-1991 the composition is skewed to polar residues; sequence SQGSSSKSTPA. The PDZ-binding motif lies at 2006–2009; it reads YGCV. Positions 2007-2009 are DVL1-binding; sequence GCV.

This sequence belongs to the CCDC88 family. In terms of assembly, homooligomer. Interacts with DVL1 (via PDZ domain); dissociates following initiation of non-canonical Wnt signaling. Interacts (via C-terminus) with ligand-activated Wnt receptor FZD7; competes with DVL1 for binding to FZD7 and displaces DVL1 from ligand-activated FZD7. Interacts (via GBA motif) with guanine nucleotide-binding protein G(i) alpha subunits GNAI1, GNAI2 and GNAI3 (inactive GDP-bound form); interacts with higher affinity with GNAI1 and GNAI3 than with GNAI2 and interaction leads to G(i) alpha subunit activation. Does not interact with GNAO1.

It localises to the cytoplasm. Its subcellular location is the cell junction. Required for activation of guanine nucleotide-binding proteins (G-proteins) during non-canonical Wnt signaling. Binds to ligand-activated Wnt receptor FZD7, displacing DVL1 from the FZD7 receptor and leading to inhibition of canonical Wnt signaling. Acts as a non-receptor guanine nucleotide exchange factor by also binding to guanine nucleotide-binding protein G(i) alpha (Gi-alpha) subunits, leading to their activation. Binding to Gi-alpha subunits displaces the beta and gamma subunits from the heterotrimeric G-protein complex, triggering non-canonical Wnt responses such as activation of RAC1 and PI3K-AKT signaling. Promotes apical constriction of cells via ARHGEF18. The polypeptide is Protein Daple (Ccdc88c) (Mus musculus (Mouse)).